We begin with the raw amino-acid sequence, 251 residues long: Adenosine 5'-phosphosulfate reductase (251 aa).

Cys121, Cys122, Cys204, and Cys207 together coordinate [4Fe-4S] cluster. The Nucleophile; cysteine thiosulfonate intermediate role is filled by Cys232.

Belongs to the PAPS reductase family. CysH subfamily. It depends on [4Fe-4S] cluster as a cofactor.

The protein localises to the cytoplasm. The enzyme catalyses [thioredoxin]-disulfide + sulfite + AMP + 2 H(+) = adenosine 5'-phosphosulfate + [thioredoxin]-dithiol. It functions in the pathway sulfur metabolism; hydrogen sulfide biosynthesis; sulfite from sulfate. Functionally, catalyzes the formation of sulfite from adenosine 5'-phosphosulfate (APS) using thioredoxin as an electron donor. The polypeptide is Adenosine 5'-phosphosulfate reductase (Sinorhizobium fredii (strain USDA 257)).